Consider the following 90-residue polypeptide: MVSLDPEKKNEIIKEFQIHENDTGSVEVQIALLTARIKHLTEHLRKHPKDFHSRRGLMKMIGRRRKMLKYLRHKKPEVYRELIAKLGIRK.

Belongs to the universal ribosomal protein uS15 family. Part of the 30S ribosomal subunit. Forms a bridge to the 50S subunit in the 70S ribosome, contacting the 23S rRNA.

One of the primary rRNA binding proteins, it binds directly to 16S rRNA where it helps nucleate assembly of the platform of the 30S subunit by binding and bridging several RNA helices of the 16S rRNA. In terms of biological role, forms an intersubunit bridge (bridge B4) with the 23S rRNA of the 50S subunit in the ribosome. In Thermotoga maritima (strain ATCC 43589 / DSM 3109 / JCM 10099 / NBRC 100826 / MSB8), this protein is Small ribosomal subunit protein uS15.